Consider the following 380-residue polypeptide: Probable polyglutamine synthesis accessory protein MT0602 (380 aa).

It belongs to the CapA family.

In terms of biological role, could be involved in the biosynthesis, transport or localization of poly-alpha-L-glutamine (PLG), a cell wall component. Contributes to stress tolerance and virulence. The sequence is that of Probable polyglutamine synthesis accessory protein MT0602 from Mycobacterium tuberculosis (strain CDC 1551 / Oshkosh).